The sequence spans 215 residues: Deoxyribose-phosphate aldolase (215 aa).

Catalysis depends on D89, which acts as the Proton donor/acceptor. The active-site Schiff-base intermediate with acetaldehyde is K150. K174 acts as the Proton donor/acceptor in catalysis.

It belongs to the DeoC/FbaB aldolase family. DeoC type 1 subfamily.

The protein localises to the cytoplasm. The enzyme catalyses 2-deoxy-D-ribose 5-phosphate = D-glyceraldehyde 3-phosphate + acetaldehyde. It functions in the pathway carbohydrate degradation; 2-deoxy-D-ribose 1-phosphate degradation; D-glyceraldehyde 3-phosphate and acetaldehyde from 2-deoxy-alpha-D-ribose 1-phosphate: step 2/2. Functionally, catalyzes a reversible aldol reaction between acetaldehyde and D-glyceraldehyde 3-phosphate to generate 2-deoxy-D-ribose 5-phosphate. This chain is Deoxyribose-phosphate aldolase, found in Natronomonas pharaonis (strain ATCC 35678 / DSM 2160 / CIP 103997 / JCM 8858 / NBRC 14720 / NCIMB 2260 / Gabara) (Halobacterium pharaonis).